Reading from the N-terminus, the 343-residue chain is Isopentenyl-diphosphate delta-isomerase (343 aa).

6–7 (RK) contributes to the substrate binding site. Residues S63, 64–66 (SMT), S94, and N122 contribute to the FMN site. Residue 94–96 (SMR) coordinates substrate. Q157 contributes to the substrate binding site. E158 is a Mg(2+) binding site. Residues K189, T219, 269 to 271 (GLK), and 290 to 291 (AG) each bind FMN.

It belongs to the IPP isomerase type 2 family. Homooctamer. Dimer of tetramers. FMN serves as cofactor. The cofactor is NADPH. Requires Mg(2+) as cofactor.

It localises to the cytoplasm. The enzyme catalyses isopentenyl diphosphate = dimethylallyl diphosphate. In terms of biological role, involved in the biosynthesis of isoprenoids. Catalyzes the 1,3-allylic rearrangement of the homoallylic substrate isopentenyl (IPP) to its allylic isomer, dimethylallyl diphosphate (DMAPP). In Rickettsia bellii (strain OSU 85-389), this protein is Isopentenyl-diphosphate delta-isomerase.